Reading from the N-terminus, the 448-residue chain is Glutamyl-tRNA reductase (448 aa).

Substrate is bound by residues 49–52, Ser-109, 114–116, and Gln-120; these read TCNR and ETQ. Cys-50 (nucleophile) is an active-site residue. 189-194 lines the NADP(+) pocket; the sequence is GAGEMS.

The protein belongs to the glutamyl-tRNA reductase family. In terms of assembly, homodimer.

It catalyses the reaction (S)-4-amino-5-oxopentanoate + tRNA(Glu) + NADP(+) = L-glutamyl-tRNA(Glu) + NADPH + H(+). Its pathway is porphyrin-containing compound metabolism; protoporphyrin-IX biosynthesis; 5-aminolevulinate from L-glutamyl-tRNA(Glu): step 1/2. Its function is as follows. Catalyzes the NADPH-dependent reduction of glutamyl-tRNA(Glu) to glutamate 1-semialdehyde (GSA). The protein is Glutamyl-tRNA reductase of Staphylococcus aureus (strain Mu3 / ATCC 700698).